A 29-amino-acid polypeptide reads, in one-letter code: Inorganic pyrophosphatase (29 aa).

It is found in the periplasm. It carries out the reaction diphosphate + H2O = 2 phosphate + H(+). Inorganic pyrophosphatase is an essential enzyme for the activation of sulfate by sulfate reducing bacteria. This is a high activity pyrophosphatase. This chain is Inorganic pyrophosphatase, found in Nitratidesulfovibrio vulgaris (strain ATCC 29579 / DSM 644 / CCUG 34227 / NCIMB 8303 / VKM B-1760 / Hildenborough) (Desulfovibrio vulgaris).